Here is a 282-residue protein sequence, read N- to C-terminus: NAD(P)H-hydrate epimerase (282 aa).

Residues 1 to 53 (MSGLRTLLGLGLLVAGSRLPRIASRQSVCRAGPIWWGTQHRSSETMASAAVKY) constitute a mitochondrion transit peptide. One can recognise a YjeF N-terminal domain in the interval 59 to 269 (AQAVDEELFN…ALEKKYQLNL (211 aa)). 113–117 (NNGGD) contributes to the (6S)-NADPHX binding site. Position 114 (Asn114) interacts with K(+). Position 138 is an N6-succinyllysine (Lys138). Asp179 contacts K(+). (6S)-NADPHX contacts are provided by residues 183-189 (GFSFKGD) and Asp212. Ser215 is a K(+) binding site.

The protein belongs to the NnrE/AIBP family. As to quaternary structure, homodimer. Interacts with APOA1 and APOA2. K(+) serves as cofactor. Undergoes physiological phosphorylation during sperm capacitation, downstream to PKA activation.

The protein resides in the mitochondrion. It localises to the secreted. The enzyme catalyses (6R)-NADHX = (6S)-NADHX. The catalysed reaction is (6R)-NADPHX = (6S)-NADPHX. Catalyzes the epimerization of the S- and R-forms of NAD(P)HX, a damaged form of NAD(P)H that is a result of enzymatic or heat-dependent hydration. This is a prerequisite for the S-specific NAD(P)H-hydrate dehydratase to allow the repair of both epimers of NAD(P)HX. Accelerates cholesterol efflux from endothelial cells to high-density lipoprotein (HDL) and thereby regulates angiogenesis. This chain is NAD(P)H-hydrate epimerase, found in Rattus norvegicus (Rat).